We begin with the raw amino-acid sequence, 264 residues long: Pimeloyl-[acyl-carrier protein] methyl ester esterase (264 aa).

In terms of domain architecture, AB hydrolase-1 spans 23–244; sequence LVMLHGWGVN…MLAKASHAPF (222 aa). Substrate contacts are provided by residues W29, 87-88, and 150-154; these read SL and FLAIQ. Residue S87 is the Nucleophile of the active site. Catalysis depends on residues D214 and H241. H241 lines the substrate pocket.

Belongs to the AB hydrolase superfamily. Carboxylesterase BioH family. In terms of assembly, monomer.

The protein localises to the cytoplasm. It catalyses the reaction 6-carboxyhexanoyl-[ACP] methyl ester + H2O = 6-carboxyhexanoyl-[ACP] + methanol + H(+). It participates in cofactor biosynthesis; biotin biosynthesis. In terms of biological role, the physiological role of BioH is to remove the methyl group introduced by BioC when the pimeloyl moiety is complete. It allows to synthesize pimeloyl-ACP via the fatty acid synthetic pathway through the hydrolysis of the ester bonds of pimeloyl-ACP esters. The sequence is that of Pimeloyl-[acyl-carrier protein] methyl ester esterase from Shewanella sp. (strain MR-7).